Reading from the N-terminus, the 236-residue chain is MLVPIPALNDNYIWLYGRENLPVIAIDVAECKNLSAYLTQHHLQLEAVLLTHYHDDHTGGVEELKRYYPDIPVYGPAETADKGATHIVNEGNIQTAHYRIEVVPSGGHTANHVSYLIDNHLFCGDTLFSAGCGRVFTGDYGQMFESITRLKQLPDKTVICPAHEYTLSNLVFAEAFAPNEKVKSAVKNQRISVESLRAQNKPSLPTTLALEKNINPFLQAENLADFIYLRKAKDNF.

His52, His54, Asp56, His57, His108, Asp125, and His163 together coordinate Zn(2+).

It belongs to the metallo-beta-lactamase superfamily. Glyoxalase II family. As to quaternary structure, monomer. Zn(2+) serves as cofactor.

The enzyme catalyses an S-(2-hydroxyacyl)glutathione + H2O = a 2-hydroxy carboxylate + glutathione + H(+). It participates in secondary metabolite metabolism; methylglyoxal degradation; (R)-lactate from methylglyoxal: step 2/2. Functionally, thiolesterase that catalyzes the hydrolysis of S-D-lactoyl-glutathione to form glutathione and D-lactic acid. The protein is Hydroxyacylglutathione hydrolase of Mannheimia succiniciproducens (strain KCTC 0769BP / MBEL55E).